The sequence spans 354 residues: DNA integrity scanning protein DisA (354 aa).

Positions 6 to 144 (DDELKKILKI…GDIKYVLRDS (139 aa)) constitute a DAC domain. Residues Gly73, Leu91, and 104-108 (TRHRT) contribute to the ATP site.

It belongs to the DisA family. Homooctamer. Mg(2+) is required as a cofactor.

It catalyses the reaction 2 ATP = 3',3'-c-di-AMP + 2 diphosphate. In terms of biological role, participates in a DNA-damage check-point that is active prior to asymmetric division when DNA is damaged. DisA forms globular foci that rapidly scan along the chromosomes during sporulation, searching for lesions. When a lesion is present, DisA pauses at the lesion site. This triggers a cellular response that culminates in a temporary block in sporulation initiation. Its function is as follows. Also has diadenylate cyclase activity, catalyzing the condensation of 2 ATP molecules into cyclic di-AMP (c-di-AMP). c-di-AMP acts as a signaling molecule that couples DNA integrity with progression of sporulation. The rise in c-di-AMP level generated by DisA while scanning the chromosome, operates as a positive signal that advances sporulation; upon encountering a lesion, the DisA focus arrests at the damaged site and halts c-di-AMP synthesis. The sequence is that of DNA integrity scanning protein DisA from Clostridium perfringens (strain SM101 / Type A).